Consider the following 700-residue polypeptide: Tectonic-2 (700 aa).

Residues Met-1–Gly-25 form the signal peptide. The Extracellular portion of the chain corresponds to Asp-26–Cys-665. N-linked (GlcNAc...) asparagine glycosylation is found at Asn-76, Asn-82, Asn-146, Asn-156, and Asn-389. Residues Val-666–Leu-682 traverse the membrane as a helical segment. The Cytoplasmic portion of the chain corresponds to Arg-683–His-700.

The protein belongs to the tectonic family. In terms of assembly, part of the tectonic-like complex (also named B9 complex).

It localises to the membrane. The protein localises to the cytoplasm. Its subcellular location is the cytoskeleton. The protein resides in the cilium basal body. Functionally, component of the tectonic-like complex, a complex localized at the transition zone of primary cilia and acting as a barrier that prevents diffusion of transmembrane proteins between the cilia and plasma membranes. Required for hedgehog signaling transduction. The sequence is that of Tectonic-2 (Tctn2) from Rattus norvegicus (Rat).